We begin with the raw amino-acid sequence, 672 residues long: MKTLKTLKIFIIICIASVSLASFAGFGESCSSLPTTSDGYLETDTAYGYIIRNIDMKDPRGNCNSAASSITFCFKNIEGSSSPCTIYNLNEGDSKKISDLSTDNNPDLGANPVLKDIVLTVKKWDNDLCLVMPTSRGPMPVACKSLSATPTPTPPDDENCNIGKSCYTGANYSQSLINFSGLAVQCLSETLNKVFFAGNSCSSQDQNSRITNLAAFSTFQGYLKRIIGAALILYTMFFAFNMALNKEYASTEKIALFVIKFLLVAYFSIGLGPLDFSGGQPTKENGMLKYGLPLLTGAAPDFAQMIFNAAGSRGLCQFDNSKYKDGYKFYGLWDAIDCRIGYYLGLDLLYNIDKNGVLGNSIGNGPGGNNTPIPNFDPDGKKDRPKDLSKAGALRFFAVMFGFFMAGNVIILAAGLVFSVIFLSILLYFITHYLVCMITIYVMTYISPIFIPMALFTRTKAYFDGWLKVCISCALQPAVVAGFIALLITMYDSAIFKNCEFLRYDYEKGDIRFSTFELRLPNGGADKCQESFGYKMLQYYAGEGWEEHLLILFPIKSIVKDVVSILAELLCVLVFSVIFYYFSKSIGRFASDLTNGPNMDAVTASPTKIVDLVKKGAAFLKDAAMASQGKPSVGDKPDVGGKRKEGEQQGGDSESGAGGGLADLASGSGGGK.

An N-terminal signal peptide occupies residues 1 to 24; sequence MKTLKTLKIFIIICIASVSLASFA. 6 helical membrane-spanning segments follow: residues 226–246, 254–274, 410–430, 436–456, 469–489, and 562–582; these read IIGA…ALNK, IALF…LGPL, IILA…LYFI, CMIT…MALF, VCIS…LLIT, and VVSI…FYYF. The interval 626 to 672 is disordered; it reads ASQGKPSVGDKPDVGGKRKEGEQQGGDSESGAGGGLADLASGSGGGK. A compositionally biased stretch (basic and acidic residues) spans 633–647; sequence VGDKPDVGGKRKEGE. Residues 656–672 are compositionally biased toward gly residues; it reads GAGGGLADLASGSGGGK.

It belongs to the TrbL/VirB6 family.

The protein localises to the cell membrane. This is an uncharacterized protein from Rickettsia felis (strain ATCC VR-1525 / URRWXCal2) (Rickettsia azadi).